We begin with the raw amino-acid sequence, 124 residues long: Histone H2A (124 aa).

Positions 1-18 (MSGRGKGGKVKGKAKSRS) are enriched in basic residues. The interval 1–21 (MSGRGKGGKVKGKAKSRSNRA) is disordered. At S2 the chain carries N-acetylserine. S2 carries the post-translational modification Phosphoserine. K36 bears the N6-succinyllysine mark. Q104 is modified (N5-methylglutamine). Residue K119 forms a Glycyl lysine isopeptide (Lys-Gly) (interchain with G-Cter in ubiquitin) linkage. T120 carries the phosphothreonine modification.

It belongs to the histone H2A family. In terms of assembly, the nucleosome is a histone octamer containing two molecules each of H2A, H2B, H3 and H4 assembled in one H3-H4 heterotetramer and two H2A-H2B heterodimers. The octamer wraps approximately 147 bp of DNA. The chromatin-associated form, but not the free cytoplasmic form, is phosphorylated on Thr-120 by NHK-1 during mitosis, and dephosphorylated during S-phase. Also phosphorylated on Thr-120 by NHK-1 during prophase I of meiosis; which is required for acetylation of H3 'Lys-14' and H4 'Lys-5', diassembly of the synaptonemal complex, and karyosome formation. In terms of processing, monoubiquitination of Lys-119 by sce/dRING gives a specific tag for epigenetic transcriptional repression. Post-translationally, phosphorylation on Ser-2 is enhanced during mitosis. Phosphorylation on Ser-2 directly represses transcription.

The protein resides in the nucleus. The protein localises to the chromosome. In terms of biological role, core component of nucleosome. Nucleosomes wrap and compact DNA into chromatin, limiting DNA accessibility to the cellular machineries which require DNA as a template. Histones thereby play a central role in transcription regulation, DNA repair, DNA replication and chromosomal stability. DNA accessibility is regulated via a complex set of post-translational modifications of histones, also called histone code, and nucleosome remodeling. This chain is Histone H2A (His2A), found in Drosophila erecta (Fruit fly).